Here is a 131-residue protein sequence, read N- to C-terminus: Large ribosomal subunit protein eL32 (131 aa).

It belongs to the eukaryotic ribosomal protein eL32 family.

In Candida glabrata (strain ATCC 2001 / BCRC 20586 / JCM 3761 / NBRC 0622 / NRRL Y-65 / CBS 138) (Yeast), this protein is Large ribosomal subunit protein eL32 (RPL32).